Consider the following 380-residue polypeptide: Cytochrome b (380 aa).

The next 4 helical transmembrane spans lie at 34–54 (FGSL…FLAM), 78–99 (WLIR…YLHI), 114–134 (WNIG…GYVL), and 179–199 (FFTF…IHLL). Residues His84 and His98 each contribute to the heme b site. The heme b site is built by His183 and His197. Residue His202 coordinates a ubiquinone. A run of 4 helical transmembrane segments spans residues 227–247 (YKDL…ALFT), 289–309 (LGGV…PILH), 321–341 (ITQI…WIGG), and 348–368 (FITI…ILFP).

Belongs to the cytochrome b family. In terms of assembly, the cytochrome bc1 complex contains 3 respiratory subunits (MT-CYB, CYC1 and UQCRFS1), 2 core proteins (UQCRC1 and UQCRC2) and probably 6 low-molecular weight proteins. The cofactor is heme b.

Its subcellular location is the mitochondrion inner membrane. In terms of biological role, component of the ubiquinol-cytochrome c reductase complex (complex III or cytochrome b-c1 complex) that is part of the mitochondrial respiratory chain. The b-c1 complex mediates electron transfer from ubiquinol to cytochrome c. Contributes to the generation of a proton gradient across the mitochondrial membrane that is then used for ATP synthesis. The chain is Cytochrome b (mt-cyb) from Hemitrygon laosensis (Mekong freshwater stingray).